Consider the following 909-residue polypeptide: Villin-1 (909 aa).

Gelsolin-like repeat units lie at residues 29–79 (KQLI…VDSI), 149–189 (VRVK…QEKA), 262–305 (GNLH…TERK), 391–448 (LKVW…QDRA), 529–569 (MQAI…SDHE), and 631–672 (LKVK…KSKE). 2 disordered regions span residues 733-781 (SLKG…CSSE) and 816-835 (DGVARQESSSKSDISKQKPR). Residues 752 to 762 (QSKDNASRDLQ) are compositionally biased toward basic and acidic residues. Residue serine 780 is modified to Phosphoserine. Residues 844–909 (SLESLAYSYE…NKLKISLHLF (66 aa)) enclose the HP domain.

This sequence belongs to the villin/gelsolin family. As to expression, expressed in all tissues examined. Mainly detected in the vascular tissue and the pericycle of roots and in the vasculature of leaves. Not expressed in the root cap.

The protein resides in the cytoplasm. Its subcellular location is the cytoskeleton. In terms of biological role, binds actin and actin filament bundles in a Ca(2+)/calmodulin-insensitive manner, but is unable to sever, cap, and nucleate actin filament formation in vitro. Does not protect individual filaments from severing by VLN3 (AC O81645). In Arabidopsis thaliana (Mouse-ear cress), this protein is Villin-1.